The chain runs to 110 residues: Minor capsid protein VP2 (110 aa).

The protein belongs to the vesivirus VP2 protein family. Homooligomer. The portal-like structure consists in 12 copies of VP2. Interacts with capsid protein VP1.

The protein resides in the virion. It localises to the host cytoplasm. In terms of biological role, minor structural protein that forms a portal-like structure at a unique three-fold axis of symmetry, following binding to the host receptor. The channel formed by VP2 may allow the delivery of the viral genome through the host endosomal membrane. The chain is Minor capsid protein VP2 from Otariidae (fur seals &amp; sea lions).